A 7311-amino-acid polypeptide reads, in one-letter code: MAM and LDL-receptor class A domain-containing protein 2 (7311 aa).

MAM domains lie at Ala4–Thr171, Leu199–Pro361, Lys363–Pro530, Gly532–Val695, Tyr727–Val887, Met889–Leu1050, Gly1052–Leu1220, Phe1228–Ser1392, Gly1394–Ala1557, Gly1559–Gln1722, Asn1755–Ser1918, Thr1920–Leu2087, Gly2089–Val2254, Asn2274–Pro2437, Thr2439–Pro2601, and Gly2603–Gly2771. Residues Trp2461 to Thr2481 are disordered. Low complexity predominate over residues Gly2466 to Pro2475. 2 consecutive P-type domains span residues Gly2771–Pro2817 and Ser2818–Pro2862. Intrachain disulfides connect Cys2773–Cys2802, Cys2784–Cys2801, Cys2795–Cys2813, Cys2820–Cys2847, Cys2831–Cys2846, and Cys2841–Cys2858. MAM domains are found at residues Trp2883 to Pro3048, Arg3050 to Pro3214, Gly3216 to Ser3384, and Gly3429 to Leu3587. Residues Ser3593–Tyr3628 enclose the LDL-receptor class A 1 domain. 3 disulfides stabilise this stretch: Cys3594-Cys3605, Cys3600-Cys3618, and Cys3612-Cys3627. The MAM 21 domain maps to Tyr3632–Ser3794. LDL-receptor class A domains follow at residues Pro3814–Gly3850 and Ser4016–Ala4054. 3 cysteine pairs are disulfide-bonded: Cys3815–Cys3827, Cys3822–Cys3840, and Cys3834–Cys3849. The MAM 22 domain maps to Gly3850–Leu4011. Intrachain disulfides connect Cys4017–Cys4029, Cys4024–Cys4042, and Cys4036–Cys4053. The region spanning Glu4058–Pro4221 is the MAM 23 domain. Residues Gly4239–Pro4276 enclose the LDL-receptor class A 4 domain. 3 disulfides stabilise this stretch: Cys4240–Cys4253, Cys4247–Cys4266, and Cys4260–Cys4275. Residues Ala4277–Glu4438 enclose the MAM 24 domain. Residues Thr4444 to Ala4483 enclose the LDL-receptor class A 5 domain. 3 disulfides stabilise this stretch: Cys4445–Cys4458, Cys4453–Cys4471, and Cys4465–Cys4482. One can recognise an MAM 25 domain in the interval Asn4486–Val4646. LDL-receptor class A domains follow at residues Pro4660 to Gly4699 and Tyr4859 to Ser4899. Cystine bridges form between Cys4668/Cys4687, Cys4681/Cys4698, Cys4860/Cys4876, Cys4871/Cys4889, and Cys4883/Cys4898. The MAM 26 domain occupies Trp4700 to Gly4862. The region spanning Ser4903–Gln5063 is the MAM 27 domain. Positions Asn5085–Pro5122 constitute an LDL-receptor class A 8 domain. 3 disulfide bridges follow: Cys5086/Cys5099, Cys5093/Cys5112, and Cys5106/Cys5121. The MAM 28 domain occupies His5123–Leu5281. One can recognise an LDL-receptor class A 9 domain in the interval Ser5287–Gly5322. 3 cysteine pairs are disulfide-bonded: Cys5288–Cys5299, Cys5294–Cys5312, and Cys5306–Cys5321. The MAM 29 domain maps to Thr5326 to Gln5489. One can recognise an LDL-receptor class A 10 domain in the interval Gln5513 to Ala5552. Disulfide bonds link Cys5514–Cys5529, Cys5521–Cys5542, and Cys5536–Cys5551. One can recognise an MAM 30 domain in the interval Thr5554 to Pro5719. The LDL-receptor class A 11 domain occupies Lys5725–Ser5763. 3 disulfide bridges follow: Cys5726–Cys5738, Cys5733–Cys5751, and Cys5745–Cys5762. Residues Gly5768–Asp5935 form the MAM 31 domain. Positions Pro5957–Gly5993 constitute an LDL-receptor class A 12 domain. 3 disulfides stabilise this stretch: Cys5958–Cys5970, Cys5965–Cys5983, and Cys5977–Cys5992. One can recognise an MAM 32 domain in the interval Ser5994–Val6156. A disordered region spans residues Asn6014–Asp6034. The span at Lys6023–Asp6034 shows a compositional bias: polar residues. The LDL-receptor class A 13 domain occupies Thr6161 to Ser6200. 3 disulfide bridges follow: Cys6162–Cys6175, Cys6169–Cys6188, and Cys6182–Cys6199. The region spanning Ala6204–Lys6365 is the MAM 33 domain. An LDL-receptor class A 14 domain is found at Arg6377–Pro6414. 3 cysteine pairs are disulfide-bonded: Cys6378–Cys6391, Cys6385–Cys6404, and Cys6398–Cys6413. MAM domains lie at Ala6430–Lys6590, Leu6606–Phe6779, Gly6808–Phe6965, and Gly7173–Leu7311.

In terms of tissue distribution, component of the acid-insoluble and acid-soluble organic matrix of the aragonitic skeleton (at protein level).

Its subcellular location is the secreted. This is MAM and LDL-receptor class A domain-containing protein 2 from Acropora millepora (Staghorn coral).